Reading from the N-terminus, the 386-residue chain is O-phospho-L-seryl-tRNA:Cys-tRNA synthase (386 aa).

Pyridoxal 5'-phosphate-binding positions include 89-90 (AR), Asn196, and 219-221 (SGH). Lys222 carries the post-translational modification N6-(pyridoxal phosphate)lysine.

This sequence belongs to the SepCysS family. In terms of assembly, homodimer. Interacts with SepRS. Pyridoxal 5'-phosphate serves as cofactor.

The enzyme catalyses O-phospho-L-seryl-tRNA(Cys) + hydrogen sulfide + H(+) = L-cysteinyl-tRNA(Cys) + phosphate. Its function is as follows. Converts O-phospho-L-seryl-tRNA(Cys) (Sep-tRNA(Cys)) to L-cysteinyl-tRNA(Cys) (Cys-tRNA(Cys)). The chain is O-phospho-L-seryl-tRNA:Cys-tRNA synthase from Methanosarcina acetivorans (strain ATCC 35395 / DSM 2834 / JCM 12185 / C2A).